The chain runs to 268 residues: Putative carbamate hydrolase RutD (268 aa).

Positions 15–119 (PVMVMIAGLG…VIVNGWLSLS (105 aa)) constitute an AB hydrolase-1 domain.

Belongs to the AB hydrolase superfamily. Hydrolase RutD family.

It carries out the reaction carbamate + 2 H(+) = NH4(+) + CO2. Functionally, involved in pyrimidine catabolism. May facilitate the hydrolysis of carbamate, a reaction that can also occur spontaneously. The sequence is that of Putative carbamate hydrolase RutD from Cronobacter sakazakii (strain ATCC BAA-894) (Enterobacter sakazakii).